A 938-amino-acid chain; its full sequence is Isoleucine--tRNA ligase (938 aa).

A 'HIGH' region motif is present at residues 58-68 (PYANGSIHIGH). K183 is subject to N6-acetyllysine. Residue E561 coordinates L-isoleucyl-5'-AMP. The 'KMSKS' region motif lies at 602-606 (KMSKS). K605 contacts ATP. Zn(2+) is bound by residues C901, C904, C921, and C924.

It belongs to the class-I aminoacyl-tRNA synthetase family. IleS type 1 subfamily. As to quaternary structure, monomer. Requires Zn(2+) as cofactor.

It is found in the cytoplasm. It catalyses the reaction tRNA(Ile) + L-isoleucine + ATP = L-isoleucyl-tRNA(Ile) + AMP + diphosphate. Its function is as follows. Catalyzes the attachment of isoleucine to tRNA(Ile). As IleRS can inadvertently accommodate and process structurally similar amino acids such as valine, to avoid such errors it has two additional distinct tRNA(Ile)-dependent editing activities. One activity is designated as 'pretransfer' editing and involves the hydrolysis of activated Val-AMP. The other activity is designated 'posttransfer' editing and involves deacylation of mischarged Val-tRNA(Ile). The sequence is that of Isoleucine--tRNA ligase from Escherichia coli O9:H4 (strain HS).